We begin with the raw amino-acid sequence, 316 residues long: Tyrosine recombinase XerD (316 aa).

Positions 4-97 (AALQTQLQGY…AVRGLHRFAV (94 aa)) constitute a Core-binding (CB) domain. The Tyr recombinase domain occupies 118–309 (RLPKSLTVDE…TVQALREVWA (192 aa)). Residues Arg162, Lys186, His261, Arg264, and His287 contribute to the active site. The active-site O-(3'-phospho-DNA)-tyrosine intermediate is the Tyr296.

It belongs to the 'phage' integrase family. XerD subfamily. In terms of assembly, forms a cyclic heterotetrameric complex composed of two molecules of XerC and two molecules of XerD.

Its subcellular location is the cytoplasm. Its function is as follows. Site-specific tyrosine recombinase, which acts by catalyzing the cutting and rejoining of the recombining DNA molecules. The XerC-XerD complex is essential to convert dimers of the bacterial chromosome into monomers to permit their segregation at cell division. It also contributes to the segregational stability of plasmids. The chain is Tyrosine recombinase XerD from Mycobacterium leprae (strain TN).